A 156-amino-acid polypeptide reads, in one-letter code: MNTIEGKLTLTGKEKIAIINARFNHIITDRLVEGAKDAFMRHGGDEKNLSLILVPGAYEIPFALDLAIKSSKFDAICCVGAIIRGSTPHFDYVAAETAKGIAQTTLKYGIPVSFGVLTTENIEQAIERAGSKAGNKGFEAMSSVIEMLNLYKNLKA.

5-amino-6-(D-ribitylamino)uracil is bound by residues Phe23, 57–59, and 81–83; these read AYE and AII. (2S)-2-hydroxy-3-oxobutyl phosphate is bound at residue 86–87; that stretch reads ST. His89 (proton donor) is an active-site residue. Position 114 (Phe114) interacts with 5-amino-6-(D-ribitylamino)uracil. Arg128 contributes to the (2S)-2-hydroxy-3-oxobutyl phosphate binding site.

It belongs to the DMRL synthase family.

The enzyme catalyses (2S)-2-hydroxy-3-oxobutyl phosphate + 5-amino-6-(D-ribitylamino)uracil = 6,7-dimethyl-8-(1-D-ribityl)lumazine + phosphate + 2 H2O + H(+). It functions in the pathway cofactor biosynthesis; riboflavin biosynthesis; riboflavin from 2-hydroxy-3-oxobutyl phosphate and 5-amino-6-(D-ribitylamino)uracil: step 1/2. In terms of biological role, catalyzes the formation of 6,7-dimethyl-8-ribityllumazine by condensation of 5-amino-6-(D-ribitylamino)uracil with 3,4-dihydroxy-2-butanone 4-phosphate. This is the penultimate step in the biosynthesis of riboflavin. The protein is 6,7-dimethyl-8-ribityllumazine synthase of Campylobacter hominis (strain ATCC BAA-381 / DSM 21671 / CCUG 45161 / LMG 19568 / NCTC 13146 / CH001A).